The primary structure comprises 930 residues: Isoleucine--tRNA ligase (930 aa).

The 'HIGH' region motif lies at 57 to 67 (PYANGNIHVGH). An L-isoleucyl-5'-AMP-binding site is contributed by Glu-554. Positions 595-599 (KMSKS) match the 'KMSKS' region motif. Lys-598 is a binding site for ATP. Residues Cys-888, Cys-891, Cys-908, and Cys-911 each coordinate Zn(2+).

This sequence belongs to the class-I aminoacyl-tRNA synthetase family. IleS type 1 subfamily. In terms of assembly, monomer. Zn(2+) serves as cofactor.

It localises to the cytoplasm. The enzyme catalyses tRNA(Ile) + L-isoleucine + ATP = L-isoleucyl-tRNA(Ile) + AMP + diphosphate. Functionally, catalyzes the attachment of isoleucine to tRNA(Ile). As IleRS can inadvertently accommodate and process structurally similar amino acids such as valine, to avoid such errors it has two additional distinct tRNA(Ile)-dependent editing activities. One activity is designated as 'pretransfer' editing and involves the hydrolysis of activated Val-AMP. The other activity is designated 'posttransfer' editing and involves deacylation of mischarged Val-tRNA(Ile). The sequence is that of Isoleucine--tRNA ligase from Streptococcus mutans serotype c (strain ATCC 700610 / UA159).